Consider the following 118-residue polypeptide: Elongin-B (118 aa).

Met1 carries the post-translational modification N-acetylmethionine. The 66-residue stretch at 1–66 (MDVFLMIRRH…LGECGFTSQT (66 aa)) folds into the Ubiquitin-like domain. Phosphothreonine is present on Thr84. Residues 92 to 118 (PFSSPPELPDVMKPQDSGSSANEQAVQ) are disordered. A compositionally biased stretch (polar residues) spans 107–118 (DSGSSANEQAVQ). Phosphoserine is present on residues Ser108 and Ser111.

Belongs to the Elongin B family. In terms of assembly, heterotrimer of an A (ELOA, ELOA2 or ELOA3P), ELOB and ELOC subunit. The elongin BC complex interacts with EPOP; leading to recruit the elongin BC complex to Polycomb group (PcG) target genes, thereby restricting excessive activity of the PRC2/EED-EZH2 complex. Component of multiple cullin-RING E3 ubiquitin-protein ligase complexes composed of Elongin BC (ELOB and ELOC), a cullin (either CUL2 or CUL5), a catalytic subunit (either RBX1 or RNF7/RBX2), as well as a substrate adapter protein that can be either ASB2, ASB9, ASB11, KLHDC2, KLHDC3, KLHDC10, APPBP2, FEM1A, FEM1B, FEM1C, LRR1, PCMTD1, SOCS1, SOCS2, SOCS5, SPSB1, SPSB3, ELOA, VHL, WSB1 or RAB40C. As part of the Elongin BC E3 ubiquitin ligase complex; interacts with NRBP1. May also interact with DCUN1D1, DCUN1D2, DCUN1D3 and DCUN1D5. May form oligomers as a KLHDC2/KLHDC3-ELOB-ELOC complex; this interaction is autoinhibitory for the E3 ligase complex as the substrate-binding site of KLHDC2/KLHDC3 is blocked in the oligomer. (Microbial infection) Following infection by HIV-1 virus, component of a cullin-5-RING E3 ubiquitin-protein ligase complex (ECS complex) hijacked by the HIV-1 Vif protein. As to quaternary structure, (Microbial infection) Substrate adapter protein can be a viral protein such as HIV Vif. In terms of assembly, (Microbial infection) Interacts with molluscum contagiosum virus MC132. (Microbial infection) Interacts with herpes virus 8 virus protein LANA1.

The protein localises to the nucleus. It functions in the pathway protein modification; protein ubiquitination. SIII, also known as elongin, is a general transcription elongation factor that increases the RNA polymerase II transcription elongation past template-encoded arresting sites. Subunit A is transcriptionally active and its transcription activity is strongly enhanced by binding to the dimeric complex of the SIII regulatory subunits B and C (elongin BC complex). In embryonic stem cells, the elongin BC complex is recruited by EPOP to Polycomb group (PcG) target genes in order generate genomic region that display both active and repressive chromatin properties, an important feature of pluripotent stem cells. Its function is as follows. Core component of multiple cullin-2 and cullin-5-RING E3 ubiquitin-protein ligase complexes (ECS complexes), which mediate the ubiquitination of target proteins. By binding to BC-box motifs it seems to link target recruitment subunits, like VHL and members of the SOCS box family, to Cullin/RBX1 modules that activate E2 ubiquitination enzymes. Component the von Hippel-Lindau ubiquitination complex CBC(VHL). A number of ECS complexes (containing either KLHDC2, KLHDC3, KLHDC10, APPBP2, FEM1A, FEM1B or FEM1C as substrate-recognition component) are part of the DesCEND (destruction via C-end degrons) pathway, which recognizes a C-degron located at the extreme C terminus of target proteins, leading to their ubiquitination and degradation. The ECS(ASB9) complex mediates ubiquitination and degradation of CKB. As part of a multisubunit ubiquitin ligase complex, polyubiquitinates monoubiquitinated POLR2A. ECS(LRR1) ubiquitinates MCM7 and promotes CMG replisome disassembly by VCP and chromatin extraction during S-phase. As part of the ECS(RAB40C) complex, mediates ANKRD28 ubiquitination and degradation, thereby inhibiting protein phosphatase 6 (PP6) complex activity and focal adhesion assembly during cell migration. Functionally, (Microbial infection) Following infection by HIV-1 virus, component of a cullin-5-RING E3 ubiquitin-protein ligase complex (ECS complex) hijacked by the HIV-1 Vif protein, which catalyzes ubiquitination and degradation of APOBEC3F and APOBEC3G. The complex can also ubiquitinate APOBEC3H to some extent. The chain is Elongin-B from Homo sapiens (Human).